Consider the following 423-residue polypeptide: D-tagatose-1,6-bisphosphate aldolase subunit GatZ (423 aa).

This sequence belongs to the GatZ/KbaZ family. GatZ subfamily. In terms of assembly, forms a complex with GatY.

The protein operates within carbohydrate metabolism; D-tagatose 6-phosphate degradation; D-glyceraldehyde 3-phosphate and glycerone phosphate from D-tagatose 6-phosphate: step 2/2. Functionally, component of the tagatose-1,6-bisphosphate aldolase GatYZ that is required for full activity and stability of the Y subunit. Could have a chaperone-like function for the proper and stable folding of GatY. When expressed alone, GatZ does not show any aldolase activity. Is involved in the catabolism of galactitol. The polypeptide is D-tagatose-1,6-bisphosphate aldolase subunit GatZ (Klebsiella pneumoniae subsp. pneumoniae (strain ATCC 700721 / MGH 78578)).